We begin with the raw amino-acid sequence, 237 residues long: Putative glutathione-dependent formaldehyde-activating enzyme (237 aa).

The region spanning 38–152 (ITLICHCPPS…LGQSGGSEGE (115 aa)) is the CENP-V/GFA domain. Residues Cys-42, Cys-44, Cys-67, Cys-69, Cys-72, Cys-114, and Cys-117 each coordinate Zn(2+).

It belongs to the Gfa family. It depends on Zn(2+) as a cofactor.

It catalyses the reaction S-(hydroxymethyl)glutathione = glutathione + formaldehyde. It participates in one-carbon metabolism; formaldehyde degradation; formate from formaldehyde (glutathione route): step 1/3. Its function is as follows. Catalyzes the condensation of formaldehyde and glutathione to S-hydroxymethylglutathione. This chain is Putative glutathione-dependent formaldehyde-activating enzyme, found in Sordaria macrospora (strain ATCC MYA-333 / DSM 997 / K(L3346) / K-hell).